Consider the following 477-residue polypeptide: MKHIVKNIHFVGIGGAGMSGIAEVLLNLGYKVSGSDVGNNAATRRLASLGATVMHGHDAANVTGANAVVVSTAVSGDNPEVLAARSKRIPVVPRAVMLAELMRLKQGVAIAGTHGKTTTTSLVASVLAEGGLDPTFVIGGRLNSAGANARLGTGDFIVAEADESDASFLNLFPVIEVITNIDADHMDTYGHDFARLKQAFIEFTQRLPFYGIAVLCVDDPNVREILPFVSKPVVRYGFAEDAQIRAVDARAVDGQMHFTVQRQLNGHTEPPLEIVLNLPGLHNVQNALAAIAIATELEVPDAAIVKALREFHGVGRRFQRYGEVATPDGAGTFTLVDDYGHHPVEMAATLAAARGAFPGRRLVLAFQPHRFTRTRDCFEDFVKVLGTVDALLLSEVYAAGEAPIVAADGRALTRALRVAGKVEPVFVEQMEEMPQAILDAVRPGDVVVTMGAGSIGAVPGQLVSHQQSTQSTQGGQA.

112-118 (GTHGKTT) provides a ligand contact to ATP.

Belongs to the MurCDEF family.

It localises to the cytoplasm. It catalyses the reaction UDP-N-acetyl-alpha-D-muramate + L-alanine + ATP = UDP-N-acetyl-alpha-D-muramoyl-L-alanine + ADP + phosphate + H(+). It participates in cell wall biogenesis; peptidoglycan biosynthesis. Its function is as follows. Cell wall formation. This chain is UDP-N-acetylmuramate--L-alanine ligase, found in Cupriavidus necator (strain ATCC 17699 / DSM 428 / KCTC 22496 / NCIMB 10442 / H16 / Stanier 337) (Ralstonia eutropha).